A 56-amino-acid polypeptide reads, in one-letter code: Serine protease inhibitor Kazal-type 1 (56 aa).

A Kazal-like domain is found at 3-56 (LGREAKCNNNAGGCTKIYNPVCGTDGNTYPNECMLCVENQKRQMPVLIQRSGPC). 3 disulfide bridges follow: C9-C38, C16-C35, and C24-C56.

It localises to the secreted. In terms of biological role, serine protease inhibitor which exhibits anti-trypsin activity. In the pancreas, protects against trypsin-catalyzed premature activation of zymogens. In the male reproductive tract, binds to sperm heads where it modulates sperm capacitance by inhibiting calcium uptake and nitrogen oxide (NO) production. This Equus caballus (Horse) protein is Serine protease inhibitor Kazal-type 1 (SPINK1).